The primary structure comprises 967 residues: Dolichyl-phosphooligosaccharide-protein glycotransferase 1 (967 aa).

The Cytoplasmic segment spans residues 1-21; that stretch reads MVKTQIKEKKKDEKVTIPLPG. A helical transmembrane segment spans residues 22–42; the sequence is KIKTVLAFLVVLAFAAYGFYI. The Extracellular portion of the chain corresponds to 43 to 112; the sequence is RHLTAGKYFS…ISIFGYNELE (70 aa). A DXD motif 1 motif is present at residues 53–55; sequence DPD. Asp-55 is a Mn(2+) binding site. Residues 113–133 form a helical membrane-spanning segment; sequence AFLLWPPFVGFLSVIGVYLLG. Topologically, residues 134–135 are cytoplasmic; that stretch reads RK. Residues 136–156 traverse the membrane as a helical segment; sequence VLNEWAGMWGAIILSVLTANF. Over 157–165 the chain is Extracellular; sequence SRTFSGNAR. Positions 165 and 167 each coordinate Mn(2+). Positions 165–167 match the DXD motif 2 motif; it reads RGD. A helical transmembrane segment spans residues 166–186; sequence GDGPFMMLFTFSAVLMLYYLT. Topologically, residues 187–193 are cytoplasmic; it reads EENKNKK. A helical membrane pass occupies residues 194–214; sequence IIWGTLFVLLAGISTAAWNGS. Pro-215 is a topological domain (extracellular). The helical transmembrane segment at 216 to 236 threads the bilayer; sequence FGLMVLLGFASFQTIILFIFG. At 237-247 the chain is on the cytoplasmic side; sequence KINELREFIKE. A helical transmembrane segment spans residues 248–268; that stretch reads YYPAYLGILAISYLLTIPGIG. A topological domain (extracellular) is located at residue Lys-269. A helical transmembrane segment spans residues 270-290; that stretch reads IGGFVRFAFEVFLGLVFLAIV. Residues 291-306 are Cytoplasmic-facing; it reads MLYGGKYLNYSDKKHR. The chain crosses the membrane as a helical span at residues 307 to 327; the sequence is FAVVAVIVIAGFAGAYIYVGP. Topologically, residues 328-360 are extracellular; the sequence is KLFTLMGGAYQSTQVYETVQELAKTDWGDVKVY. The TIXE motif motif lies at 345 to 348; sequence TVQE. Residues 361 to 381 form a helical membrane-spanning segment; sequence YGVEKPNGIVFFLGLVGAMIV. Residues 382–396 lie on the Cytoplasmic side of the membrane; sequence TARYLYKLFKDGRRP. The chain crosses the membrane as a helical span at residues 397-417; sequence HEELFAITFYVMSIYLLWTAA. A topological domain (extracellular) is located at residue Arg-418. Arg-418 contributes to the a glycophospholipid binding site. The helical transmembrane segment at 419-439 threads the bilayer; sequence FLFLASYAIALMSGVFAGYVL. The Cytoplasmic segment spans residues 440 to 453; the sequence is ETVEKMKESIPIKA. The helical transmembrane segment at 454–474 threads the bilayer; it reads ALGGVIAIMLLLIPLTHGPLL. Residues 475–967 lie on the Extracellular side of the membrane; the sequence is AQSAKSMRTT…LEVSASAPHH (493 aa). The segment at 511-513 is interacts with target acceptor peptide in protein substrate; sequence WWD. The WWDYG motif motif lies at 511-515; sequence WWDYG. Position 516 (Tyr-516) interacts with a glycophospholipid. The DK motif motif lies at 571–578; the sequence is DWAKFNAI.

The protein belongs to the STT3 family. Requires Mn(2+) as cofactor. The cofactor is Mg(2+).

It localises to the cell membrane. The catalysed reaction is an archaeal dolichyl phosphooligosaccharide + [protein]-L-asparagine = an archaeal dolichyl phosphate + a glycoprotein with the oligosaccharide chain attached by N-beta-D-glycosyl linkage to a protein L-asparagine.. Its pathway is protein modification; protein glycosylation. Its function is as follows. Oligosaccharyl transferase (OST) that catalyzes the initial transfer of a defined glycan (ManNAcXyl(2)GlcAMan(2)GalNAc in P.furiosus) from the lipid carrier dolichol-monophosphate to an asparagine residue within an Asn-X-Ser/Thr consensus motif in nascent polypeptide chains, the first step in protein N-glycosylation. The chain is Dolichyl-phosphooligosaccharide-protein glycotransferase 1 (aglB1) from Pyrococcus furiosus (strain ATCC 43587 / DSM 3638 / JCM 8422 / Vc1).